The primary structure comprises 340 residues: HTH-type transcriptional regulator PtxS (340 aa).

Residues 12–67 (VTISEVAQAAGVSKATVSRYIGGDRQLLADATAQRIEAVIEQLGYRPNRMASALKR) form the HTH lacI-type domain. The segment at residues 14 to 33 (ISEVAQAAGVSKATVSRYIG) is a DNA-binding region (H-T-H motif).

As to quaternary structure, homodimer.

With respect to regulation, 2-ketogluconate acts as a molecular effector and causes dissociation of PtxS from its target promoter. Glucose negatively affects the molecular binding of PtxS and 2KGA, and gluconic acid inhibits the PtxS-2KGA binding reaction. Its function is as follows. Involved in the regulation of 2-ketogluconic acid metabolism via the control of the expression of the kgu operon. Binds directly to a 14-bp palindrome sequence via its conserved HTH motif. The protein is HTH-type transcriptional regulator PtxS of Pseudomonas plecoglossicida.